Reading from the N-terminus, the 220-residue chain is UPF0319 protein YccT (220 aa).

Residues 1–20 (MKTGALTTFLALCLPVTVFA) form the signal peptide.

This sequence belongs to the UPF0319 family.

This chain is UPF0319 protein YccT, found in Salmonella dublin (strain CT_02021853).